We begin with the raw amino-acid sequence, 326 residues long: Aspartate carbamoyltransferase catalytic subunit (326 aa).

Carbamoyl phosphate is bound by residues arginine 65 and threonine 66. Lysine 93 contributes to the L-aspartate binding site. The carbamoyl phosphate site is built by arginine 115, histidine 143, and glutamine 146. Residues arginine 176 and arginine 230 each contribute to the L-aspartate site. Carbamoyl phosphate-binding residues include glycine 271 and proline 272.

The protein belongs to the aspartate/ornithine carbamoyltransferase superfamily. ATCase family. Heterododecamer (2C3:3R2) of six catalytic PyrB chains organized as two trimers (C3), and six regulatory PyrI chains organized as three dimers (R2).

It carries out the reaction carbamoyl phosphate + L-aspartate = N-carbamoyl-L-aspartate + phosphate + H(+). It functions in the pathway pyrimidine metabolism; UMP biosynthesis via de novo pathway; (S)-dihydroorotate from bicarbonate: step 2/3. Functionally, catalyzes the condensation of carbamoyl phosphate and aspartate to form carbamoyl aspartate and inorganic phosphate, the committed step in the de novo pyrimidine nucleotide biosynthesis pathway. In Mesorhizobium japonicum (strain LMG 29417 / CECT 9101 / MAFF 303099) (Mesorhizobium loti (strain MAFF 303099)), this protein is Aspartate carbamoyltransferase catalytic subunit.